The following is a 2570-amino-acid chain: Highly reducing polyketide synthase tstA (2570 aa).

One can recognise a Ketosynthase family 3 (KS3) domain in the interval 16 to 443; it reads AMPIAVVGIG…GANAHVVLEN (428 aa). Active-site for beta-ketoacyl synthase activity residues include cysteine 191, histidine 326, and histidine 366. Residues 458–478 form a disordered region; that stretch reads HTRKSATESSGTSTPSNPGPH. Over residues 464 to 478 the composition is skewed to low complexity; that stretch reads TESSGTSTPSNPGPH. The region spanning 567–898 is the Malonyl-CoA:ACP transacylase (MAT) domain; the sequence is FVFTGQGAQW…YSALVRNKNA (332 aa). The tract at residues 965–1103 is N-terminal hotdog fold; sequence TDLLGVLERN…GLVSVVAPQK (139 aa). Residues 965 to 1293 form the PKS/mFAS DH domain; it reads TDLLGVLERN…CATLAREGAD (329 aa). The Proton acceptor; for dehydratase activity role is filled by histidine 997. The segment at 1133 to 1293 is C-terminal hotdog fold; sequence RRNINVPQFY…CATLAREGAD (161 aa). Residue aspartate 1198 is the Proton donor; for dehydratase activity of the active site. The methyltransferase (CMeT) domain stretch occupies residues 1343–1645; the sequence is LERAAYYMLK…IATSINSNNY (303 aa). The region spanning 1866 to 2178 is the Enoyl reductase (ER) domain; it reads GLLDSIFWTD…TGGHMGKLVG (313 aa). The region spanning 2202 to 2379 is the Ketoreductase (KR) domain; that stretch reads ASYVLIGGLG…ATTIDLGAIS (178 aa). Residues 2482-2559 form the Carrier domain; the sequence is DASELILGAL…HLATKIAQRS (78 aa). Serine 2519 bears the O-(pantetheine 4'-phosphoryl)serine mark.

The cofactor is pantetheine 4'-phosphate.

Its pathway is secondary metabolite biosynthesis. Highly reducing polyketide synthase; part of the gene cluster that mediates the biosynthesis of the antihypercholesterolemic agents phomoidrides which are dimeric anhydrides. The pathway begins with the highly reducing polyketide synthase tstA that catalyzes the formation of a C12-fatty acyl-ACP, starting from one acetate and 5 malonate units. The hydrolase tstM is involved in the release of the C12-fatty acyl chain from tstA. The alkylcitrate synthase (ACS) tstJ and the alkylcitrate dehydratase (ACDH) tstI then give rise to decarboxylated monomeric anhydrides by coupling the C12-fatty acyl chain with oxalacetic acid. The cyclase tstC is responsible for the dimerization of the monomeric anhydrides which leads to the production of prephomoidride that contains the characteristic bicyclo[4.3.1]deca-1,6-diene system of phomoidrides. Iterative oxidation catalyzed by the alpha-ketoglutarate-dependent dioxygenase tstK produced then phomoidride A. Finally, the methyltransferase tstE converts phomoidride A to phomoidride B via an acetalization reaction. The phosphatidylethanolamine-binding protein tstB and tstN are not essential for dimerization and their functions have still to be determined. This is Highly reducing polyketide synthase tstA from Talaromyces stipitatus (strain ATCC 10500 / CBS 375.48 / QM 6759 / NRRL 1006) (Penicillium stipitatum).